We begin with the raw amino-acid sequence, 284 residues long: MDPKFLVVEIDSKERALQLVQVMLENGFARFMLLDDLSRHPTLDRIQREEPRISRDELRETASSPVTFETRHSPYPVHEQKVLFPSFSQVSNSMVTSTGIRQEASSVGVGPIEDDDIVEEEEEEDIRLTSKPCVKRRYDHHAEEQEYRDQLMSLLSGEPEIVPIGVNSNDEPSGSNSDSAAKKAKSVGDYHECQLCGVRVKTPRSGRWNLQMHVIALHCVGRQYKCKQCDYLDYRKSTMRKHTVSQHGSDIPPHNITDNIMKAEWHAAMIKCFPEFAHRTGFLN.

A compositionally biased stretch (basic and acidic residues) spans 50–60; that stretch reads EPRISRDELRE. The interval 50-71 is disordered; that stretch reads EPRISRDELRETASSPVTFETR. The segment at 224–247 adopts a C2H2-type zinc-finger fold; the sequence is YKCKQCDYLDYRKSTMRKHTVSQH.

Expressed in FLP neurons.

It is found in the nucleus. In terms of biological role, positively regulates the RNA polymerase III-associated transcription of small non-coding RNAs. The chain is Transcription factor lir-3 from Caenorhabditis elegans.